The primary structure comprises 307 residues: uncharacterized protein (307 aa).

This is an uncharacterized protein from Saccharum officinarum (Sugarcane).